The sequence spans 237 residues: Ribosomal RNA small subunit methyltransferase G (237 aa).

S-adenosyl-L-methionine contacts are provided by residues G76, F81, 128 to 129 (IE), and R147.

Belongs to the methyltransferase superfamily. RNA methyltransferase RsmG family.

The protein localises to the cytoplasm. Functionally, specifically methylates the N7 position of a guanine in 16S rRNA. The protein is Ribosomal RNA small subunit methyltransferase G of Prochlorococcus marinus (strain MIT 9301).